The chain runs to 128 residues: Large ribosomal subunit protein bL12 (128 aa).

It belongs to the bacterial ribosomal protein bL12 family. In terms of assembly, homodimer. Part of the ribosomal stalk of the 50S ribosomal subunit. Forms a multimeric L10(L12)X complex, where L10 forms an elongated spine to which 2 to 4 L12 dimers bind in a sequential fashion. Binds GTP-bound translation factors.

Forms part of the ribosomal stalk which helps the ribosome interact with GTP-bound translation factors. Is thus essential for accurate translation. The polypeptide is Large ribosomal subunit protein bL12 (Methylobacillus flagellatus (strain ATCC 51484 / DSM 6875 / VKM B-1610 / KT)).